The sequence spans 469 residues: Origin recognition complex subunit 6 (469 aa).

Composition is skewed to low complexity over residues 218–234 (SSTLNNTTTSTTTTAPK) and 275–308 (ATPTLSSSSSSSSSSSSSLSPPLSSNPTTDLSST). 4 disordered regions span residues 218–241 (SSTLNNTTTSTTTTAPKSPIPIPS), 275–309 (ATPTLSSSSSSSSSSSSSLSPPLSSNPTTDLSSTN), 356–423 (ESPF…EGDL), and 436–469 (KEQQFNDWKNSDFAKSKPTPVNATKQLTLDSFFK). Basic and acidic residues-rich tracts occupy residues 380–390 (SRDELEKESEL) and 409–423 (QKEKSVKNKINEGDL). Polar residues predominate over residues 454-469 (TPVNATKQLTLDSFFK).

This sequence belongs to the ORC6 family. In terms of assembly, ORC is composed of six subunits.

Its subcellular location is the nucleus. Its function is as follows. Component of the origin recognition complex (ORC) that binds origins of replication. DNA-binding is ATP-dependent, however specific DNA sequences that define origins of replication have not been identified so far. ORC is required to assemble the pre-replication complex necessary to initiate DNA replication. This is Origin recognition complex subunit 6 (orcF) from Dictyostelium discoideum (Social amoeba).